A 793-amino-acid polypeptide reads, in one-letter code: RNA-binding protein spenito (793 aa).

Disordered stretches follow at residues 1–93 and 243–296; these read MSSH…PPAE and HHDY…KKDK. The span at 25-42 shows a compositional bias: low complexity; that stretch reads SRSPGPASRSSLSRNSRS. Residues 257–268 show a composition bias toward basic residues; sequence RGGHPHHLHGHA. Basic and acidic residues predominate over residues 285–296; the sequence is APYEKPESKKDK. 2 RRM domains span residues 314-391 and 395-469; these read RTLF…YGKV and TRMW…FAEL. The segment at 507–623 is disordered; it reads YAPRGGYSPY…RNDALASAST (117 aa). The span at 526–536 shows a compositional bias: basic residues; that stretch reads GGYRGRGRGMY. The span at 566–593 shows a compositional bias: basic and acidic residues; the sequence is DEWRRPPGESYDRGARSSSREPGVERSR. In terms of domain architecture, SPOC spans 624–791; that stretch reads VPDVARKCST…HLVIVVVRGG (168 aa).

It belongs to the RRM Spen family. As to quaternary structure, component of the WMM complex, a N6-methyltransferase complex composed of a catalytic subcomplex, named MAC, and of an associated subcomplex, named MACOM. The MAC subcomplex is composed of Ime4/Mettl3 and Mettl14. The MACOM subcomplex is composed of fl(2)d, Flacc/Xio, Hakai, vir, and, in some cases of nito. Interacts with Sxl. Interacts with Hipk; leading to phosphorylation. Post-translationally, phosphorylated by Hipk at Ser-23, Ser-25 and/or Ser-27; the precise position if phosphorylation sites is unknown. Widely expressed. Shows some enrichment in the central nervous system.

It localises to the nucleus. Its function is as follows. RNA-binding protein that acts as an associated component of the WMM complex, a complex that mediates N6-methyladenosine (m6A) methylation of mRNAs. M6a modification plays a role in the efficiency of mRNA splicing and is required for sex determination. In the WMM complex, may act by binding target RNAs and recruiting the WMM complex. Required for sex determination and dosage compensation via Sxl alternative splicing: m6A methylation acts as a key regulator of Sxl pre-mRNA and promotes female-specific alternative splicing of Sxl, which determines female physiognomy. M6A methylation is also required for neuronal functions. Acts as a positive regulator of canonical Wg signaling during wing disk and eye development. The protein is RNA-binding protein spenito of Drosophila melanogaster (Fruit fly).